The chain runs to 302 residues: Probable alpha-L-glutamate ligase 1 (302 aa).

The ATP-grasp domain maps to 104–287 (MQLLSRKGIG…VANMIIEFIE (184 aa)). Residues lysine 141, 178-179 (EY), aspartate 187, and 211-213 (RSN) contribute to the ATP site. Mg(2+) contacts are provided by aspartate 248, glutamate 260, and asparagine 262. Residues aspartate 248, glutamate 260, and asparagine 262 each coordinate Mn(2+).

This sequence belongs to the RimK family. Mg(2+) serves as cofactor. Requires Mn(2+) as cofactor.

In Pseudoalteromonas atlantica (strain T6c / ATCC BAA-1087), this protein is Probable alpha-L-glutamate ligase 1.